The following is a 140-amino-acid chain: Iron sulfur cluster assembly protein 1 (140 aa).

It belongs to the NifU family. Component of the core Fe-S cluster (ISC) assembly machinery. It depends on [2Fe-2S] cluster as a cofactor.

The protein localises to the mitosome matrix. It participates in cofactor biosynthesis; iron-sulfur cluster biosynthesis. Its function is as follows. Scaffold protein for the de novo synthesis of iron-sulfur (Fe-S) clusters within mitosomes, which is required for maturation of both [2Fe-2S] and [4Fe-4S] proteins. First, a [2Fe-2S] cluster is transiently assembled on the scaffold protein ISU1. In a second step, the cluster is released from ISU1, transferred to a glutaredoxin, followed by the formation of [2Fe-2S] proteins, the synthesis of [4Fe-4S] clusters and their target-specific insertion into the recipient apoproteins. Cluster assembly on ISU1 depends on the function of the cysteine desulfurase complex NFS1-ISD11, which serves as the sulfur donor for cluster synthesis, the iron-binding protein frataxin as the putative iron donor, and the electron transfer chain comprised of ferredoxin reductase and ferredoxin, which receive their electrons from NADH. The polypeptide is Iron sulfur cluster assembly protein 1 (ISU1) (Encephalitozoon cuniculi (strain GB-M1) (Microsporidian parasite)).